Here is a 234-residue protein sequence, read N- to C-terminus: Hydrolase in agr operon (234 aa).

One can recognise a CN hydrolase domain in the interval 1-212 (ILYNKDTDVV…EKELTVTIDI (212 aa)). Catalysis depends on glutamate 14, which acts as the Proton acceptor. Catalysis depends on lysine 83, which acts as the Proton donor. The Nucleophile role is filled by cysteine 119.

It belongs to the carbon-nitrogen hydrolase superfamily. NIT1/NIT2 family.

The sequence is that of Hydrolase in agr operon from Staphylococcus lugdunensis.